The primary structure comprises 168 residues: Small ribosomal subunit protein bS16 (168 aa).

A disordered region spans residues L110–A168. A compositionally biased stretch (basic and acidic residues) spans A129–A144. Positions E153 to A168 are enriched in acidic residues.

It belongs to the bacterial ribosomal protein bS16 family.

This Corynebacterium efficiens (strain DSM 44549 / YS-314 / AJ 12310 / JCM 11189 / NBRC 100395) protein is Small ribosomal subunit protein bS16.